The following is a 311-amino-acid chain: Probable 5-dehydro-4-deoxyglucarate dehydratase (311 aa).

Belongs to the DapA family.

The enzyme catalyses 5-dehydro-4-deoxy-D-glucarate + H(+) = 2,5-dioxopentanoate + CO2 + H2O. It functions in the pathway carbohydrate acid metabolism; D-glucarate degradation; 2,5-dioxopentanoate from D-glucarate: step 2/2. The polypeptide is Probable 5-dehydro-4-deoxyglucarate dehydratase (Ralstonia nicotianae (strain ATCC BAA-1114 / GMI1000) (Ralstonia solanacearum)).